The chain runs to 118 residues: ATP synthase subunit g, mitochondrial (118 aa).

F-type ATP synthases have 2 components, the catalytic core F(1) and the membrane-embedded component F(0), linked together by a central stalk and a peripheral stalk. The central stalk, also called rotor shaft, is often seen as part of F(1). The peripheral stalk is seen as part of F(0). F(0) contains the membrane channel next to the rotor. F-type ATP synthases form dimers but each monomer functions independently in ATP generation. The dimer consists of 18 different polypeptides: ATP1 (subunit alpha, part of F(1), 3 molecules per monomer), ATP2 (subunit beta, part of F(1), 3 molecules per monomer), ATP3 (subunit gamma, part of the central stalk), ATP4 (subunit b, part of the peripheral stalk), ATP5/OSCP (subunit 5/OSCP, part of the peripheral stalk), ATP6 (subunit a, part of the peripheral stalk), ATP7 (subunit d, part of the peripheral stalk), ATP8 (subunit 8, part of the peripheral stalk), OLI1 (subunit c, part of the rotor, 10 molecules per monomer), ATP14 (subunit h, part of the peripheral stalk), ATP15 (subunit epsilon, part of the central stalk), ATP16 (subunit delta, part of the central stalk), ATP17 (subunit f, part of the peripheral stalk), ATP18 (subunit i/j, part of the peripheral stalk). Dimer-specific subunits are ATP19 (subunit k, at interface between monomers), ATP20 (subunit g, at interface between monomers), TIM11 (subunit e, at interface between monomers). Also contains subunit L.

The protein localises to the mitochondrion inner membrane. Its function is as follows. Mitochondrial membrane ATP synthase (F(1)F(0) ATP synthase or Complex V) produces ATP from ADP in the presence of a proton gradient across the membrane which is generated by electron transport complexes of the respiratory chain. F-type ATP synthases consist of two structural domains, F(1) - containing the extramembraneous catalytic core, and F(0) - containing the membrane proton channel, linked together by a central stalk and a peripheral stalk. During catalysis, ATP synthesis in the catalytic domain of F(1) is coupled via a rotary mechanism of the central stalk subunits to proton translocation. Part of the complex F(0) domain Minor subunit located with subunit a/ATP6 in the membrane. Together with subunit e/TIM11, probably contributes to membrane curvature at the site of the ATP synthase dimer, ultimately contributing to formation of cristae. The chain is ATP synthase subunit g, mitochondrial from Pichia angusta (Yeast).